The primary structure comprises 385 residues: tRNA-specific 2-thiouridylase MnmA (385 aa).

ATP contacts are provided by residues 30-37 (GMSGGVDS) and methionine 56. An interaction with target base in tRNA region spans residues 118–120 (NPD). Cysteine 123 functions as the Nucleophile in the catalytic mechanism. A disulfide bond links cysteine 123 and cysteine 220. Glycine 148 is an ATP binding site. Residues 170–172 (KDQ) form an interaction with tRNA region. Cysteine 220 serves as the catalytic Cysteine persulfide intermediate. The segment at 332 to 333 (RY) is interaction with tRNA.

Belongs to the MnmA/TRMU family.

The protein resides in the cytoplasm. It catalyses the reaction S-sulfanyl-L-cysteinyl-[protein] + uridine(34) in tRNA + AH2 + ATP = 2-thiouridine(34) in tRNA + L-cysteinyl-[protein] + A + AMP + diphosphate + H(+). Its function is as follows. Catalyzes the 2-thiolation of uridine at the wobble position (U34) of tRNA, leading to the formation of s(2)U34. This Haemophilus influenzae (strain PittGG) protein is tRNA-specific 2-thiouridylase MnmA.